The primary structure comprises 366 residues: Cobalt-precorrin-5B C(1)-methyltransferase (366 aa).

It belongs to the CbiD family.

The catalysed reaction is Co-precorrin-5B + S-adenosyl-L-methionine = Co-precorrin-6A + S-adenosyl-L-homocysteine. Its pathway is cofactor biosynthesis; adenosylcobalamin biosynthesis; cob(II)yrinate a,c-diamide from sirohydrochlorin (anaerobic route): step 6/10. Its function is as follows. Catalyzes the methylation of C-1 in cobalt-precorrin-5B to form cobalt-precorrin-6A. The polypeptide is Cobalt-precorrin-5B C(1)-methyltransferase (Thermus thermophilus (strain ATCC BAA-163 / DSM 7039 / HB27)).